We begin with the raw amino-acid sequence, 318 residues long: L-lactate dehydrogenase (318 aa).

NAD(+)-binding positions include V18, D39, K44, Y69, and 83 to 84 (GA). The substrate site is built by Q86 and R92. Residues S105, 122–124 (VSN), and S147 each bind NAD(+). 124-127 (NPVD) lines the substrate pocket. 152 to 155 (DTSR) lines the substrate pocket. H179 acts as the Proton acceptor in catalysis. Y225 carries the phosphotyrosine modification. Residue T234 participates in substrate binding.

It belongs to the LDH/MDH superfamily. LDH family. As to quaternary structure, homotetramer.

The protein resides in the cytoplasm. It carries out the reaction (S)-lactate + NAD(+) = pyruvate + NADH + H(+). It functions in the pathway fermentation; pyruvate fermentation to lactate; (S)-lactate from pyruvate: step 1/1. Catalyzes the conversion of lactate to pyruvate. This Clostridium botulinum (strain Loch Maree / Type A3) protein is L-lactate dehydrogenase.